An 848-amino-acid chain; its full sequence is MASLSFASSHASLFCCQQSSSAIILRPAGALLRLSRRQPSSHTISTTDQLFPRRSRMPRNVDTHAAAERNSPSTMSSLEAVDELETNGDSAVVVVREQQQQQHLLMGATDDGLPPSPYDTAWVAMVPAPGNPLVPRFPQCVDWILQNQRSDGSWGPDGGSGDHPSSPLGKDALMSTLACVLALKTWDAGEEHVRKGLSFVGNNSPSCVMTGDERDAPVGFSVIFPGMLARAIDMGLDIPMMTQANVDAFIRLRDTELNRMAATTGSKAFMSYVAEGLGDVLDWDEAAMVYQRQNGSFFNSPATTAAAAIHGNNDRALRYLDSLVNMFGSSVPTVYPRSTYSRLHMVDTLQKMGLSRSFVSEINEMLDMTYRSWLANDDEEMMLDMSTCAMAFRLLRMHGYDVSSDGLAQFSSESSFRDSVHGQANDTEALLELYKASQIQITEDELVLVDIRSWSAKLLKEQLGSDKVSRSVDAQEVQQVLKFPFYTTLDRLEHRRHIEQFKAGGFHMLKSAYRFCKEDEELVSLAVQGFHSSQALYQQELQFLTRWAKEARLHDLEFARIMPMNTFFPNAALMYAPELSEARILCTKNCMLATAVDDLFDVGGSREEMENLVRLIDMWDEHEEVGFCSERVEILFRAIYDTSKELAAKAMAVQNRSVINHVAELWADLVRAMMTEAEWSMRGHVPSSMEEYMQVAETSFALGPIVLMPLYLIGPELPEAVVRCPEYKQLFHHMNVCGRLLNDLQSYEREAKQGKINSVLLVAPRHGGSIEAAKSEVRRAIEASRRELLRMLVAEADATVPRPFRQEFWNMCKMVHLFYMEDDCYSSPKELVHAANMVVFDPLRVREL.

The N-terminal 64 residues, 1–64 (MASLSFASSH…SRMPRNVDTH (64 aa)), are a transit peptide targeting the chloroplast. The interval 148-168 (QRSDGSWGPDGGSGDHPSSPL) is disordered. Asp-597, Asp-601, Asn-742, Ser-746, and Glu-750 together coordinate Mg(2+). Positions 597–601 (DDLFD) match the DDXXD motif motif.

This sequence belongs to the terpene synthase family. Mg(2+) serves as cofactor.

The protein localises to the plastid. Its subcellular location is the chloroplast. The catalysed reaction is ent-copalyl diphosphate = dolabradiene + diphosphate. Functionally, involved in the production of antifungal dolabralexin phytoalexins in response to biotic and abiotic stresses. In response to fungal infection and in associtation with AN2, is involved in the production dolabradiene, a type of antifungal phytoalexin. Converts ent-copalyl disphosphate (ent-CPP) to dolabradiene. This chain is Dolabradiene synthase KSL4, chloroplastic, found in Zea mays (Maize).